The sequence spans 268 residues: Protein MGF 300-1L (268 aa).

Topologically, residues 1-175 (MVSLTTCCLK…QTFKIFYAKN (175 aa)) are cytoplasmic. The chain crosses the membrane as a helical span at residues 176-193 (YSLSTLYCIFLAIYYKRY). Residues 194-268 (TALRKMVKIY…MYAFSQNNFW (75 aa)) are Extracellular-facing.

Belongs to the asfivirus MGF 300 family.

It localises to the host membrane. In terms of biological role, plays a role in virus cell tropism, and may be required for efficient virus replication in macrophages. This is Protein MGF 300-1L from African swine fever virus (isolate Tick/South Africa/Pretoriuskop Pr4/1996) (ASFV).